We begin with the raw amino-acid sequence, 568 residues long: Phenylalanine--tRNA ligase beta subunit (568 aa).

The region spanning 278–353 (LTPKSFEVEL…IAYGYNEIEP (76 aa)) is the B5 domain. Mg(2+)-binding residues include D331, D337, E340, and D341.

It belongs to the phenylalanyl-tRNA synthetase beta subunit family. Type 2 subfamily. Tetramer of two alpha and two beta subunits. Mg(2+) serves as cofactor.

The protein localises to the cytoplasm. It carries out the reaction tRNA(Phe) + L-phenylalanine + ATP = L-phenylalanyl-tRNA(Phe) + AMP + diphosphate + H(+). The protein is Phenylalanine--tRNA ligase beta subunit of Thermococcus gammatolerans (strain DSM 15229 / JCM 11827 / EJ3).